Reading from the N-terminus, the 226-residue chain is Putative ABC transporter ATP-binding protein BH02760 (226 aa).

In terms of domain architecture, ABC transporter spans 4 to 222 (IKFDKVTQVF…IPLVAIKEYI (219 aa)). 35–42 (GANGSGKS) provides a ligand contact to ATP.

This sequence belongs to the ABC transporter superfamily.

It localises to the cell inner membrane. Probably part of an ABC transporter complex. Responsible for energy coupling to the transport system. This is Putative ABC transporter ATP-binding protein BH02760 from Bartonella henselae (strain ATCC 49882 / DSM 28221 / CCUG 30454 / Houston 1) (Rochalimaea henselae).